The primary structure comprises 417 residues: WAT1-related protein At3g02690, chloroplastic (417 aa).

A chloroplast-targeting transit peptide spans 1 to 68 (MEWPWSAIAA…RRINGDSVVR (68 aa)). Positions 67–92 (VRRSTTSNNSTEETESSSSSSSVDCV) are disordered. Over residues 68-89 (RRSTTSNNSTEETESSSSSSSV) the composition is skewed to low complexity. The next 10 membrane-spanning stretches (helical) occupy residues 122 to 142 (FLEW…MVAM), 152 to 172 (FFVA…FAVY), 183 to 203 (AWFS…GFLA), 213 to 233 (LGSV…SFLF), 237 to 257 (IGIV…LLEV), 269 to 289 (LWGS…IGTV), 301 to 321 (IMAT…ISVI), 339 to 359 (VIAL…VYFY), 369 to 389 (LSSL…LYLN), and 392 to 412 (FSSL…LVNF). 2 EamA domains span residues 133–255 (FFWG…LLLL) and 283–411 (SMAI…YLVN).

It belongs to the drug/metabolite transporter (DMT) superfamily. Plant drug/metabolite exporter (P-DME) (TC 2.A.7.4) family.

It is found in the plastid. Its subcellular location is the chloroplast membrane. The chain is WAT1-related protein At3g02690, chloroplastic from Arabidopsis thaliana (Mouse-ear cress).